A 721-amino-acid chain; its full sequence is BBSome complex member BBS2 (721 aa).

The stretch at 325–369 forms a coiled coil; sequence RGNLMDTSAEQDLIRELSQKKQNLLLELRNYEENAKAELASPLNE.

In terms of assembly, part of BBSome complex, that contains BBS1, BBS2, BBS4, BBS5, BBS7, BBS8/TTC8, BBS9 and BBIP10. Interacts (via C-terminus) with BBS7. Interacts (via coiled coil domain) with MKKS. Interacts with CCDC28B and ALDOB. Interacts with DLEC1. In terms of tissue distribution, widely expressed.

The protein resides in the cell projection. It is found in the cilium membrane. It localises to the cytoplasm. The protein localises to the cytoskeleton. Its subcellular location is the microtubule organizing center. The protein resides in the centrosome. It is found in the centriolar satellite. The BBSome complex is thought to function as a coat complex required for sorting of specific membrane proteins to the primary cilia. The BBSome complex is required for ciliogenesis but is dispensable for centriolar satellite function. This ciliogenic function is mediated in part by the Rab8 GDP/GTP exchange factor, which localizes to the basal body and contacts the BBSome. Rab8(GTP) enters the primary cilium and promotes extension of the ciliary membrane. Firstly the BBSome associates with the ciliary membrane and binds to RAB3IP/Rabin8, the guanosyl exchange factor (GEF) for Rab8 and then the Rab8-GTP localizes to the cilium and promotes docking and fusion of carrier vesicles to the base of the ciliary membrane. The BBSome complex, together with the LTZL1, controls SMO ciliary trafficking and contributes to the sonic hedgehog (SHH) pathway regulation. Required for proper BBSome complex assembly and its ciliary localization. This Homo sapiens (Human) protein is BBSome complex member BBS2.